The primary structure comprises 123 residues: Small ribosomal subunit protein uS12 (123 aa).

The residue at position 89 (D89) is a 3-methylthioaspartic acid.

This sequence belongs to the universal ribosomal protein uS12 family. In terms of assembly, part of the 30S ribosomal subunit. Contacts proteins S8 and S17. May interact with IF1 in the 30S initiation complex.

In terms of biological role, with S4 and S5 plays an important role in translational accuracy. Functionally, interacts with and stabilizes bases of the 16S rRNA that are involved in tRNA selection in the A site and with the mRNA backbone. Located at the interface of the 30S and 50S subunits, it traverses the body of the 30S subunit contacting proteins on the other side and probably holding the rRNA structure together. The combined cluster of proteins S8, S12 and S17 appears to hold together the shoulder and platform of the 30S subunit. The polypeptide is Small ribosomal subunit protein uS12 (Gluconacetobacter diazotrophicus (strain ATCC 49037 / DSM 5601 / CCUG 37298 / CIP 103539 / LMG 7603 / PAl5)).